Reading from the N-terminus, the 215-residue chain is NADH-quinone oxidoreductase subunit C (215 aa).

Belongs to the complex I 30 kDa subunit family. NDH-1 is composed of 14 different subunits. Subunits NuoB, C, D, E, F, and G constitute the peripheral sector of the complex.

The protein resides in the cell inner membrane. It carries out the reaction a quinone + NADH + 5 H(+)(in) = a quinol + NAD(+) + 4 H(+)(out). Its function is as follows. NDH-1 shuttles electrons from NADH, via FMN and iron-sulfur (Fe-S) centers, to quinones in the respiratory chain. The immediate electron acceptor for the enzyme in this species is believed to be ubiquinone. Couples the redox reaction to proton translocation (for every two electrons transferred, four hydrogen ions are translocated across the cytoplasmic membrane), and thus conserves the redox energy in a proton gradient. This chain is NADH-quinone oxidoreductase subunit C, found in Methylobacterium radiotolerans (strain ATCC 27329 / DSM 1819 / JCM 2831 / NBRC 15690 / NCIMB 10815 / 0-1).